Here is an 877-residue protein sequence, read N- to C-terminus: Alanine--tRNA ligase (877 aa).

4 residues coordinate Zn(2+): His-563, His-567, Cys-667, and His-671.

The protein belongs to the class-II aminoacyl-tRNA synthetase family. It depends on Zn(2+) as a cofactor.

The protein resides in the cytoplasm. The catalysed reaction is tRNA(Ala) + L-alanine + ATP = L-alanyl-tRNA(Ala) + AMP + diphosphate. In terms of biological role, catalyzes the attachment of alanine to tRNA(Ala) in a two-step reaction: alanine is first activated by ATP to form Ala-AMP and then transferred to the acceptor end of tRNA(Ala). Also edits incorrectly charged Ser-tRNA(Ala) and Gly-tRNA(Ala) via its editing domain. This Cytophaga hutchinsonii (strain ATCC 33406 / DSM 1761 / CIP 103989 / NBRC 15051 / NCIMB 9469 / D465) protein is Alanine--tRNA ligase.